The primary structure comprises 457 residues: Siroheme synthase (457 aa).

The interval 1–204 (MEIFPISLKL…DNLDIANQMM (204 aa)) is precorrin-2 dehydrogenase /sirohydrochlorin ferrochelatase. Residues 22–23 (HI) and 43–44 (PD) contribute to the NAD(+) site. Phosphoserine is present on S129. The segment at 216-457 (GEVYLVGAGP…VSLREQLQWL (242 aa)) is uroporphyrinogen-III C-methyltransferase. S-adenosyl-L-methionine is bound at residue P225. D248 acts as the Proton acceptor in catalysis. K270 (proton donor) is an active-site residue. S-adenosyl-L-methionine-binding positions include 301 to 303 (GGD), I306, 331 to 332 (TA), M383, and G412.

The protein in the N-terminal section; belongs to the precorrin-2 dehydrogenase / sirohydrochlorin ferrochelatase family. This sequence in the C-terminal section; belongs to the precorrin methyltransferase family.

It carries out the reaction uroporphyrinogen III + 2 S-adenosyl-L-methionine = precorrin-2 + 2 S-adenosyl-L-homocysteine + H(+). The catalysed reaction is precorrin-2 + NAD(+) = sirohydrochlorin + NADH + 2 H(+). It catalyses the reaction siroheme + 2 H(+) = sirohydrochlorin + Fe(2+). The protein operates within cofactor biosynthesis; adenosylcobalamin biosynthesis; precorrin-2 from uroporphyrinogen III: step 1/1. It participates in cofactor biosynthesis; adenosylcobalamin biosynthesis; sirohydrochlorin from precorrin-2: step 1/1. It functions in the pathway porphyrin-containing compound metabolism; siroheme biosynthesis; precorrin-2 from uroporphyrinogen III: step 1/1. Its pathway is porphyrin-containing compound metabolism; siroheme biosynthesis; siroheme from sirohydrochlorin: step 1/1. The protein operates within porphyrin-containing compound metabolism; siroheme biosynthesis; sirohydrochlorin from precorrin-2: step 1/1. Functionally, multifunctional enzyme that catalyzes the SAM-dependent methylations of uroporphyrinogen III at position C-2 and C-7 to form precorrin-2 via precorrin-1. Then it catalyzes the NAD-dependent ring dehydrogenation of precorrin-2 to yield sirohydrochlorin. Finally, it catalyzes the ferrochelation of sirohydrochlorin to yield siroheme. The polypeptide is Siroheme synthase (Acinetobacter baylyi (strain ATCC 33305 / BD413 / ADP1)).